The sequence spans 203 residues: Ras-related protein Rab-13 (203 aa).

GTP contacts are provided by Ser-17, Gly-18, Gly-20, Lys-21, Thr-22, Cys-23, and Thr-40. Position 22 (Thr-22) interacts with Mg(2+). The Switch 1 signature appears at 31 to 45 (DNFNNTYISTIGIDF). Thr-40 is a binding site for Mg(2+). Lys-58 is covalently cross-linked (Glycyl lysine isopeptide (Lys-Gly) (interchain with G-Cter in ubiquitin)). Asp-63 contributes to the Mg(2+) binding site. Residues 63–80 (DTAGQERFKTITTAYYRG) carry the Switch 2 motif. Residues Gly-66, Asn-121, Lys-122, Asp-124, Ala-152, and Lys-153 each contribute to the GTP site. Position 200 is a cysteine methyl ester (Cys-200). Residue Cys-200 is the site of S-geranylgeranyl cysteine attachment. The propeptide at 201-203 (SLA) is removed in mature form.

This sequence belongs to the small GTPase superfamily. Rab family. Interacts (GTP-bound form) with MICALL2; competes with RAB8A and is involved in tight junctions assembly. Interacts (GTP-bound form) with MICALL1. Interacts (GTP-bound form) with MICAL1, MICAL3, MICALCL, EHBP1 and EHBP1L1; ternary complexes of RAB8A, RAB13 and either MICAL1 or EHBP1L1 are possible. Interacts with PRKACA; downstream effector of RAB13 involved in tight junction assembly. Interacts with GRB2; may recruit RAB13 to the leading edge of migrating endothelial cells where it can activate RHOA. Interacts (isoprenylated form) with PDE6D; dissociates RAB13 from membranes. Interacts with BICDL2/BICDR2. Interacts with LEPROT and LEPROTL1. The cofactor is Mg(2+). In terms of processing, ubiquitinated via 'Lys-11'-linked ubiquitination on Lys-58; impairing the recruitment of guanosine diphosphate (GDP) dissociation inhibitor 1/GDI1.

It is found in the cell membrane. The protein localises to the cytoplasmic vesicle membrane. Its subcellular location is the cell junction. The protein resides in the tight junction. It localises to the golgi apparatus. It is found in the trans-Golgi network membrane. The protein localises to the recycling endosome membrane. Its subcellular location is the cell projection. The protein resides in the lamellipodium. It catalyses the reaction GTP + H2O = GDP + phosphate + H(+). Its activity is regulated as follows. Regulated by guanine nucleotide exchange factors (GEFs) including DENND1C, which promote the exchange of bound GDP for free GTP. Regulated by GTPase activating proteins (GAPs) which increase the GTP hydrolysis activity. Inhibited by GDP dissociation inhibitors (GDIs). Activated in response to insulin. In terms of biological role, the small GTPases Rab are key regulators of intracellular membrane trafficking, from the formation of transport vesicles to their fusion with membranes. Rabs cycle between an inactive GDP-bound form and an active GTP-bound form that is able to recruit to membranes different sets of downstream effectors directly responsible for vesicle formation, movement, tethering and fusion. RAB13 is involved in endocytic recycling and regulates the transport to the plasma membrane of transmembrane proteins like the tight junction protein OCLN/occludin. Thereby, it regulates the assembly and the activity of tight junctions. Moreover, it may also regulate tight junction assembly by activating the PKA signaling pathway and by reorganizing the actin cytoskeleton through the activation of the downstream effectors PRKACA and MICALL2 respectively. Through its role in tight junction assembly, may play a role in the establishment of Sertoli cell barrier. Plays also a role in angiogenesis through regulation of endothelial cells chemotaxis. Also involved in neurite outgrowth. Has also been proposed to play a role in post-Golgi membrane trafficking from the TGN to the recycling endosome. Finally, it has been involved in insulin-induced transport to the plasma membrane of the glucose transporter GLUT4 and therefore may play a role in glucose homeostasis. This is Ras-related protein Rab-13 (RAB13) from Bos taurus (Bovine).